The sequence spans 141 residues: Nuclear receptor 2C2-associated protein (141 aa).

Belongs to the NR2C2AP family.

It is found in the nucleus. In terms of biological role, may act as a repressor of nr2c2-mediated transactivation by suppressing the binding between nr2c2 and its response element in target genes. This Danio rerio (Zebrafish) protein is Nuclear receptor 2C2-associated protein (nr2c2ap).